A 462-amino-acid polypeptide reads, in one-letter code: Fumarate hydratase class II (462 aa).

Substrate-binding positions include 97 to 99 (SGT), 127 to 130 (HPND), 137 to 139 (SSN), and T185. The active-site Proton donor/acceptor is H186. S316 is a catalytic residue. Residues S317 and 322–324 (KVN) each bind substrate.

It belongs to the class-II fumarase/aspartase family. Fumarase subfamily. In terms of assembly, homotetramer.

It localises to the cytoplasm. The enzyme catalyses (S)-malate = fumarate + H2O. The protein operates within carbohydrate metabolism; tricarboxylic acid cycle; (S)-malate from fumarate: step 1/1. In terms of biological role, involved in the TCA cycle. Catalyzes the stereospecific interconversion of fumarate to L-malate. This chain is Fumarate hydratase class II, found in Halalkalibacterium halodurans (strain ATCC BAA-125 / DSM 18197 / FERM 7344 / JCM 9153 / C-125) (Bacillus halodurans).